A 243-amino-acid chain; its full sequence is Phomoidride biosynthesis cluster protein B (243 aa).

It belongs to the tstB family.

Functionally, phosphatidylethanolamine-binding protein; part of the gene cluster that mediates the biosynthesis of the antihypercholesterolemic agents phomoidrides which are dimeric anhydrides. Within the pathway, tstB is not essential for dimerization and its function has still to be determined. The pathway begins with the highly reducing polyketide synthase tstA that catalyzes the formation of a C12-fatty acyl-ACP, starting from one acetate and 5 malonate units. The hydrolase tstM is involved in the release of the C12-fatty acyl chain from phiA. The alkylcitrate synthase (ACS) tstJ and the alkylcitrate dehydratase (ACDH) tstI then give rise to decarboxylated monomeric anhydrides by coupling the C12-fatty acyl chain with oxalacetic acid. The cyclase tstC is responsible for the dimerization of the monomeric anhydrides which leads to the production of prephomoidride that contains the characteristic bicyclo[4.3.1]deca-1,6-diene system of phomoidrides. Iterative oxidation catalyzed by the alpha-ketoglutarate-dependent dioxygenase tstK produced then phomoidride A. Finally, the methyltransferase tstE converts phomoidride A to phomoidride B via an acetalization reaction. The phosphatidylethanolamine-binding protein tstB and tstN are not essential for dimerization and their functions have still to be determined. The sequence is that of Phomoidride biosynthesis cluster protein B from Talaromyces stipitatus (strain ATCC 10500 / CBS 375.48 / QM 6759 / NRRL 1006) (Penicillium stipitatum).